Reading from the N-terminus, the 533-residue chain is uncharacterized protein (533 aa).

The interval 1-26 is disordered; it reads MKRFFSKLFSKSPTSGRVPSPDSDYS. Phosphoserine occurs at positions 20 and 23. Position 25 is a phosphotyrosine (tyrosine 25). Phosphoserine is present on serine 26. A run of 10 helical transmembrane segments spans residues 178 to 198, 213 to 230, 242 to 264, 274 to 296, 313 to 333, 353 to 373, 394 to 414, 435 to 455, 466 to 486, and 495 to 515; these read ILAV…HILI, YMRV…FEAL, PITY…LVWH, APVA…ICFS, LSPM…EWAA, SILL…AVAS, RVAY…IFCF, IFPI…GGGL, GLIS…FVVV, and IWCG…TVLF.

It belongs to the multi antimicrobial extrusion (MATE) (TC 2.A.66.1) family.

It is found in the vacuole membrane. This is an uncharacterized protein from Schizosaccharomyces pombe (strain 972 / ATCC 24843) (Fission yeast).